The primary structure comprises 491 residues: Probable glycine dehydrogenase (decarboxylating) subunit 2 (491 aa).

Lys273 carries the N6-(pyridoxal phosphate)lysine modification.

It belongs to the GcvP family. C-terminal subunit subfamily. The glycine cleavage system is composed of four proteins: P, T, L and H. In this organism, the P 'protein' is a heterodimer of two subunits. Requires pyridoxal 5'-phosphate as cofactor.

The catalysed reaction is N(6)-[(R)-lipoyl]-L-lysyl-[glycine-cleavage complex H protein] + glycine + H(+) = N(6)-[(R)-S(8)-aminomethyldihydrolipoyl]-L-lysyl-[glycine-cleavage complex H protein] + CO2. Its function is as follows. The glycine cleavage system catalyzes the degradation of glycine. The P protein binds the alpha-amino group of glycine through its pyridoxal phosphate cofactor; CO(2) is released and the remaining methylamine moiety is then transferred to the lipoamide cofactor of the H protein. In Bacillus cereus (strain AH187), this protein is Probable glycine dehydrogenase (decarboxylating) subunit 2.